The sequence spans 65 residues: Large ribosomal subunit protein bL35 (65 aa).

The protein belongs to the bacterial ribosomal protein bL35 family.

The protein is Large ribosomal subunit protein bL35 of Thiobacillus denitrificans (strain ATCC 25259 / T1).